The following is a 341-amino-acid chain: Probable electron transfer flavoprotein subunit alpha, mitochondrial (341 aa).

Residue 285–313 participates in FAD binding; sequence LYIAVGIDGAIQHLAGIKDSKVIAAINRD.

Belongs to the ETF alpha-subunit/FixB family. As to quaternary structure, heterodimer of an alpha and a beta subunit. It depends on FAD as a cofactor.

Its subcellular location is the mitochondrion matrix. Its function is as follows. The electron transfer flavoprotein serves as a specific electron acceptor for several dehydrogenases, including five acyl-CoA dehydrogenases, glutaryl-CoA and sarcosine dehydrogenase. It transfers the electrons to the main mitochondrial respiratory chain via ETF-ubiquinone oxidoreductase (ETF dehydrogenase). This Schizosaccharomyces pombe (strain 972 / ATCC 24843) (Fission yeast) protein is Probable electron transfer flavoprotein subunit alpha, mitochondrial.